The primary structure comprises 501 residues: Glycerol kinase (501 aa).

Threonine 17 serves as a coordination point for ADP. 3 residues coordinate ATP: threonine 17, threonine 18, and serine 19. Threonine 17 lines the sn-glycerol 3-phosphate pocket. Arginine 21 contributes to the ADP binding site. Sn-glycerol 3-phosphate-binding residues include arginine 87, glutamate 88, tyrosine 139, and aspartate 243. Residues arginine 87, glutamate 88, tyrosine 139, aspartate 243, and glutamine 244 each contribute to the glycerol site. Residues threonine 265 and glycine 308 each contribute to the ADP site. Residues threonine 265, glycine 308, glutamine 312, and glycine 409 each contribute to the ATP site. Residues glycine 409 and asparagine 413 each coordinate ADP.

The protein belongs to the FGGY kinase family.

It carries out the reaction glycerol + ATP = sn-glycerol 3-phosphate + ADP + H(+). Its pathway is polyol metabolism; glycerol degradation via glycerol kinase pathway; sn-glycerol 3-phosphate from glycerol: step 1/1. Inhibited by fructose 1,6-bisphosphate (FBP). Its function is as follows. Key enzyme in the regulation of glycerol uptake and metabolism. Catalyzes the phosphorylation of glycerol to yield sn-glycerol 3-phosphate. The polypeptide is Glycerol kinase (Pseudomonas fluorescens (strain SBW25)).